The primary structure comprises 443 residues: Trigger factor (443 aa).

The region spanning 161–246 (GDKVVIDFQG…IKKIMEGKLP (86 aa)) is the PPIase FKBP-type domain.

Belongs to the FKBP-type PPIase family. Tig subfamily.

It is found in the cytoplasm. It carries out the reaction [protein]-peptidylproline (omega=180) = [protein]-peptidylproline (omega=0). In terms of biological role, involved in protein export. Acts as a chaperone by maintaining the newly synthesized protein in an open conformation. Functions as a peptidyl-prolyl cis-trans isomerase. The chain is Trigger factor from Legionella pneumophila subsp. pneumophila (strain Philadelphia 1 / ATCC 33152 / DSM 7513).